The chain runs to 251 residues: Leucine-rich repeat and calponin homology domain-containing protein 1 (251 aa).

The interval 73–97 (SNGSEYSPNEIRANSPAISPTANST) is disordered. Phosphoserine is present on residues Ser87 and Ser91. The segment covering 88–97 (PAISPTANST) has biased composition (polar residues). Thr123 is modified (phosphothreonine). The region spanning 131–244 (MREEKELVEH…ITVQALLDVT (114 aa)) is the Calponin-homology (CH) domain.

Interacts (via LRR repeats) with unphosphorylated DOCK8 (via DHR-2 domain); the interaction prevents the interaction between DOCK8 and CDC42.

The protein resides in the cytoplasm. Its function is as follows. Acts as a negative regulator of GTPase CDC42 by sequestering CDC42-guanine exchange factor DOCK8. Probably by preventing CDC42 activation, negatively regulates CD4(+) T-cell migration. This chain is Leucine-rich repeat and calponin homology domain-containing protein 1, found in Felis catus (Cat).